The primary structure comprises 312 residues: uncharacterized protein (312 aa).

A run of 6 helical transmembrane segments spans residues 9 to 29 (LTLT…GLFI), 115 to 135 (LATL…IGFI), 187 to 207 (ITIA…DYIT), 224 to 244 (ITVA…AGEF), 264 to 284 (ILSS…IYGF), and 292 to 312 (MIST…TLIL).

Its subcellular location is the cell membrane. This is an uncharacterized protein from Methanocaldococcus jannaschii (strain ATCC 43067 / DSM 2661 / JAL-1 / JCM 10045 / NBRC 100440) (Methanococcus jannaschii).